Reading from the N-terminus, the 153-residue chain is Pheromone-binding protein Gp-9 (153 aa).

The signal sequence occupies residues 1–19; sequence MKTFVLHIFIFALVAFASA. 3 disulfides stabilise this stretch: Cys-37–Cys-77, Cys-73–Cys-129, and Cys-118–Cys-138.

Belongs to the PBP/GOBP family. In terms of assembly, homodimer.

The protein resides in the secreted. In terms of biological role, colony queen number, a major feature of social organization, is associated with worker genotype for Gp-9. Colonies are headed by either a single reproductive queen (monogyne form) or multiple queens (polygyne form). Differences in worker Gp-9 genotypes between social forms may cause differences in workers' abilities to recognize queens and regulate their numbers. The chain is Pheromone-binding protein Gp-9 from Solenopsis tridens (Fire ant).